The sequence spans 585 residues: Arginine--tRNA ligase (585 aa).

The 'HIGH' region signature appears at 126–136 (PNIAKEMHVGH).

Belongs to the class-I aminoacyl-tRNA synthetase family. As to quaternary structure, monomer.

It is found in the cytoplasm. The enzyme catalyses tRNA(Arg) + L-arginine + ATP = L-arginyl-tRNA(Arg) + AMP + diphosphate. The chain is Arginine--tRNA ligase from Trichodesmium erythraeum (strain IMS101).